The primary structure comprises 117 residues: MDWTWRILFLVAAATGAHSQVQLVQSGAEVKKPGASVKVSCKASGYTFTGYYMHWVRQAPGQGLEWMGWINPNSGGTNYAQKFQGWVTMTRDTSISTAYMELSRLRSDDTAVYYCAR.

The signal sequence occupies residues 1-19; it reads MDWTWRILFLVAAATGAHS. At glutamine 20 the chain carries Pyrrolidone carboxylic acid. Residues 20-44 are framework-1; it reads QVQLVQSGAEVKKPGASVKVSCKAS. Residues 20-117 enclose the Ig-like domain; sequence QVQLVQSGAE…DDTAVYYCAR (98 aa). The cysteines at positions 41 and 115 are disulfide-linked. Residues 45–52 form a complementarity-determining-1 region; it reads GYTFTGYY. The segment at 53–69 is framework-2; the sequence is MHWVRQAPGQGLEWMGW. The segment at 70–77 is complementarity-determining-2; sequence INPNSGGT. A framework-3 region spans residues 78–115; it reads NYAQKFQGWVTMTRDTSISTAYMELSRLRSDDTAVYYC. The complementarity-determining-3 stretch occupies residues 116-117; the sequence is AR.

In terms of assembly, immunoglobulins are composed of two identical heavy chains and two identical light chains; disulfide-linked.

It is found in the secreted. Its subcellular location is the cell membrane. V region of the variable domain of immunoglobulin heavy chains that participates in the antigen recognition. Immunoglobulins, also known as antibodies, are membrane-bound or secreted glycoproteins produced by B lymphocytes. In the recognition phase of humoral immunity, the membrane-bound immunoglobulins serve as receptors which, upon binding of a specific antigen, trigger the clonal expansion and differentiation of B lymphocytes into immunoglobulins-secreting plasma cells. Secreted immunoglobulins mediate the effector phase of humoral immunity, which results in the elimination of bound antigens. The antigen binding site is formed by the variable domain of one heavy chain, together with that of its associated light chain. Thus, each immunoglobulin has two antigen binding sites with remarkable affinity for a particular antigen. The variable domains are assembled by a process called V-(D)-J rearrangement and can then be subjected to somatic hypermutations which, after exposure to antigen and selection, allow affinity maturation for a particular antigen. The polypeptide is Immunoglobulin heavy variable 1-2 (Homo sapiens (Human)).